Reading from the N-terminus, the 102-residue chain is Large ribosomal subunit protein bL21 (102 aa).

It belongs to the bacterial ribosomal protein bL21 family. As to quaternary structure, part of the 50S ribosomal subunit. Contacts protein L20.

Its function is as follows. This protein binds to 23S rRNA in the presence of protein L20. This Arthrobacter sp. (strain FB24) protein is Large ribosomal subunit protein bL21.